The primary structure comprises 737 residues: Polyribonucleotide nucleotidyltransferase (737 aa).

Mg(2+)-binding residues include Asp-489 and Asp-495. The 60-residue stretch at 556 to 615 folds into the KH domain; it reads PKIDTIKIDVDKIKIVIGKGGETIDKIIAETGVKIDIDEEGNVSIYSSDQDAINRAKEII. The S1 motif domain maps to 625–693; that stretch reads DEVYRAKVVR…EKGRVDASMK (69 aa). A disordered region spans residues 691–737; that stretch reads SMKALLPRPPKPERDEKGEKSERPYRPRHHKDHKPKKEITETPKDSE. Composition is skewed to basic and acidic residues over residues 700-715 and 725-737; these read PKPE…ERPY and PKKE…KDSE.

The protein belongs to the polyribonucleotide nucleotidyltransferase family. The cofactor is Mg(2+).

It localises to the cytoplasm. It carries out the reaction RNA(n+1) + phosphate = RNA(n) + a ribonucleoside 5'-diphosphate. Involved in mRNA degradation. Catalyzes the phosphorolysis of single-stranded polyribonucleotides processively in the 3'- to 5'-direction. The protein is Polyribonucleotide nucleotidyltransferase of Streptococcus pneumoniae (strain Hungary19A-6).